Here is a 95-residue protein sequence, read N- to C-terminus: MLLYLNSTLCSIISIMYKITNVSFVEYYSNNVSKDVIYSYLMNSTCSNKGTIKLNLESGKRLKQEGPYILPPIRWLDSFEKNAEFTILCEVDDIK.

Its function is as follows. The presence of the two linear plasmids, termed pGKL1 and pGKL2, in strains of Kluyveromyces lactis confers the killer phenotype to the host cell, by promoting the secretion of a toxin able to inhibit the growth of sensitive strains. This is an uncharacterized protein from Kluyveromyces lactis (strain ATCC 8585 / CBS 2359 / DSM 70799 / NBRC 1267 / NRRL Y-1140 / WM37) (Yeast).